A 317-amino-acid chain; its full sequence is Transcriptional regulator LsrR (317 aa).

Residues 33–56 (QSEISDRLGLTRLKVSRLLEKGHQ) constitute a DNA-binding region (H-T-H motif).

It belongs to the SorC transcriptional regulatory family.

It is found in the cytoplasm. With respect to regulation, inactivated by phosphorylated autoinducer-2 (phospho-AI-2). Phospho-AI-2 acts by binding to LsrR, which is then unable to bind to the promoter regions, allowing the transcription of the target genes. In terms of biological role, transcriptional regulator that represses the expression of the lsr operon in the absence of the quorum-sensing signaling molecule autoinducer 2 (AI-2). It also represses the expression of the lsrRK operon. Acts by binding directly to the lsrA and lsrR promoter regions. In the presence of phosphorylated autoinducer-2 (phospho-AI-2), LsrR is inactivated, leading to the transcription of the genes. This is Transcriptional regulator LsrR (lsrR) from Escherichia coli O157:H7.